The chain runs to 561 residues: Lanosterol 14-alpha demethylase (561 aa).

Residue C501 coordinates heme.

Belongs to the cytochrome P450 family. It depends on heme as a cofactor.

It is found in the membrane. The catalysed reaction is a 14alpha-methyl steroid + 3 reduced [NADPH--hemoprotein reductase] + 3 O2 = a Delta(14) steroid + formate + 3 oxidized [NADPH--hemoprotein reductase] + 4 H2O + 4 H(+). It catalyses the reaction a 14alpha-methyl steroid + reduced [NADPH--hemoprotein reductase] + O2 = a 14alpha-hydroxymethyl steroid + oxidized [NADPH--hemoprotein reductase] + H2O + H(+). The enzyme catalyses a 14alpha-hydroxymethyl steroid + reduced [NADPH--hemoprotein reductase] + O2 = a 14alpha-formyl steroid + oxidized [NADPH--hemoprotein reductase] + 2 H2O + H(+). It carries out the reaction a 14alpha-formyl steroid + reduced [NADPH--hemoprotein reductase] + O2 = a Delta(14) steroid + formate + oxidized [NADPH--hemoprotein reductase] + H2O + 2 H(+). The catalysed reaction is lanosterol + 3 reduced [NADPH--hemoprotein reductase] + 3 O2 = 4,4-dimethyl-5alpha-cholesta-8,14,24-trien-3beta-ol + formate + 3 oxidized [NADPH--hemoprotein reductase] + 4 H2O + 4 H(+). It catalyses the reaction lanosterol + reduced [NADPH--hemoprotein reductase] + O2 = 32-hydroxylanosterol + oxidized [NADPH--hemoprotein reductase] + H2O + H(+). The enzyme catalyses 32-hydroxylanosterol + reduced [NADPH--hemoprotein reductase] + O2 = 32-oxolanosterol + oxidized [NADPH--hemoprotein reductase] + 2 H2O + H(+). It carries out the reaction 32-oxolanosterol + reduced [NADPH--hemoprotein reductase] + O2 = 4,4-dimethyl-5alpha-cholesta-8,14,24-trien-3beta-ol + formate + oxidized [NADPH--hemoprotein reductase] + H2O + 2 H(+). The catalysed reaction is eburicol + 3 reduced [NADPH--hemoprotein reductase] + 3 O2 = 14-demethyleburicol + formate + 3 oxidized [NADPH--hemoprotein reductase] + 4 H2O + 4 H(+). It catalyses the reaction eburicol + reduced [NADPH--hemoprotein reductase] + O2 = 32-hydroxyeburicol + oxidized [NADPH--hemoprotein reductase] + H2O + H(+). The enzyme catalyses 32-hydroxyeburicol + reduced [NADPH--hemoprotein reductase] + O2 = 32-oxoeburicol + oxidized [NADPH--hemoprotein reductase] + 2 H2O + H(+). It carries out the reaction 32-oxoeburicol + reduced [NADPH--hemoprotein reductase] + O2 = 14-demethyleburicol + formate + oxidized [NADPH--hemoprotein reductase] + H2O + 2 H(+). The protein operates within steroid biosynthesis; zymosterol biosynthesis; zymosterol from lanosterol: step 1/6. In terms of biological role, sterol 14alpha-demethylase that plays a critical role in the third module of ergosterol biosynthesis pathway, being ergosterol the major sterol component in fungal membranes that participates in a variety of functions. The third module or late pathway involves the ergosterol synthesis itself through consecutive reactions that mainly occur in the endoplasmic reticulum (ER) membrane. In filamentous fungi, during the initial step of this module, lanosterol (lanosta-8,24-dien-3beta-ol) can be metabolized to eburicol. Sterol 14alpha-demethylase catalyzes the three-step oxidative removal of the 14alpha-methyl group (C-32) of both these sterols in the form of formate, and converts eburicol and lanosterol to 14-demethyleburicol (4,4,24-trimethylergosta-8,14,24(28)-trienol) and 4,4-dimethyl-5alpha-cholesta-8,14,24-trien-3beta-ol, respectively, which are further metabolized by other enzymes in the pathway to ergosterol. Can also use substrates not intrinsic to fungi, such as 24,25-dihydrolanosterol (DHL), producing 4,4-dimethyl-8,14-cholestadien-3-beta-ol, but at lower rates than the endogenous substrates. The polypeptide is Lanosterol 14-alpha demethylase (ERG11) (Mycosarcoma maydis (Corn smut fungus)).